Consider the following 370-residue polypeptide: Histidinol-phosphate aminotransferase 2 (370 aa).

Residue K230 is modified to N6-(pyridoxal phosphate)lysine.

It belongs to the class-II pyridoxal-phosphate-dependent aminotransferase family. Histidinol-phosphate aminotransferase subfamily. As to quaternary structure, homodimer. The cofactor is pyridoxal 5'-phosphate.

It carries out the reaction L-histidinol phosphate + 2-oxoglutarate = 3-(imidazol-4-yl)-2-oxopropyl phosphate + L-glutamate. Its pathway is amino-acid biosynthesis; L-histidine biosynthesis; L-histidine from 5-phospho-alpha-D-ribose 1-diphosphate: step 7/9. This Pseudomonas fluorescens (strain ATCC BAA-477 / NRRL B-23932 / Pf-5) protein is Histidinol-phosphate aminotransferase 2.